Consider the following 547-residue polypeptide: Chaperonin GroEL (547 aa).

Residues 30-33 (TLGP), Lys51, 87-91 (DGTTT), Gly415, 479-481 (NAA), and Asp495 contribute to the ATP site.

The protein belongs to the chaperonin (HSP60) family. In terms of assembly, forms a cylinder of 14 subunits composed of two heptameric rings stacked back-to-back. Interacts with the co-chaperonin GroES.

Its subcellular location is the cytoplasm. The catalysed reaction is ATP + H2O + a folded polypeptide = ADP + phosphate + an unfolded polypeptide.. In terms of biological role, together with its co-chaperonin GroES, plays an essential role in assisting protein folding. The GroEL-GroES system forms a nano-cage that allows encapsulation of the non-native substrate proteins and provides a physical environment optimized to promote and accelerate protein folding. The sequence is that of Chaperonin GroEL from Enterobacter sp. (strain 638).